We begin with the raw amino-acid sequence, 571 residues long: Septation ring formation regulator EzrA (571 aa).

The Extracellular portion of the chain corresponds to 1-3; it reads MYY. A helical transmembrane segment spans residues 4 to 22; that stretch reads MLIGFIIVVIAVIGAGYIL. Residues 23 to 571 are Cytoplasmic-facing; the sequence is KRKHYQRINE…ESKVSVDDIE (549 aa). Coiled-coil stretches lie at residues 248 to 298, 326 to 374, 400 to 437, and 478 to 529; these read LAQM…DTLE, DALA…ASGE, KFAE…ERER, and RIAE…ENHF.

This sequence belongs to the EzrA family.

The protein resides in the cell membrane. Its function is as follows. Negative regulator of FtsZ ring formation; modulates the frequency and position of FtsZ ring formation. Inhibits FtsZ ring formation at polar sites. Interacts either with FtsZ or with one of its binding partners to promote depolymerization. The sequence is that of Septation ring formation regulator EzrA from Listeria monocytogenes serotype 4b (strain CLIP80459).